The primary structure comprises 63 residues: MRCLPVFVILLLLIPSAPCVDAHPKTKDDMPLASFHDNAKGTLQRFWKKRGCCPKQMRCCTLG.

The signal sequence occupies residues 1 to 19 (MRCLPVFVILLLLIPSAPC). Positions 20-50 (VDAHPKTKDDMPLASFHDNAKGTLQRFWKKR) are excised as a propeptide. 2 disulfides stabilise this stretch: C52-C59 and C53-C60. The residue at position 62 (L62) is a Leucine amide.

Expressed by the venom duct.

The protein localises to the secreted. Functionally, in vivo, low levels of the peptide injected into male specimens of the Siamese fighting fish causes an immediate aggressive display in this fish in response to their reflection when placed in a mirrored aquarium; High levels of the peptide suppressed this behavior. No effect is observed when injected into mice. This is Conotoxin p5a from Conus purpurascens (Purple cone).